Consider the following 196-residue polypeptide: NADH-quinone oxidoreductase subunit I (196 aa).

4Fe-4S ferredoxin-type domains are found at residues 54 to 84 (LNRW…VEGA) and 104 to 133 (RVYQ…MTNE). [4Fe-4S] cluster-binding residues include Cys-64, Cys-67, Cys-70, Cys-74, Cys-113, Cys-116, Cys-119, and Cys-123.

Belongs to the complex I 23 kDa subunit family. NDH-1 is composed of 14 different subunits. Subunits NuoA, H, J, K, L, M, N constitute the membrane sector of the complex. [4Fe-4S] cluster is required as a cofactor.

Its subcellular location is the cell membrane. The catalysed reaction is a quinone + NADH + 5 H(+)(in) = a quinol + NAD(+) + 4 H(+)(out). Functionally, NDH-1 shuttles electrons from NADH, via FMN and iron-sulfur (Fe-S) centers, to quinones in the respiratory chain. The immediate electron acceptor for the enzyme in this species is believed to be ubiquinone. Couples the redox reaction to proton translocation (for every two electrons transferred, four hydrogen ions are translocated across the cytoplasmic membrane), and thus conserves the redox energy in a proton gradient. This is NADH-quinone oxidoreductase subunit I from Nocardioides sp. (strain ATCC BAA-499 / JS614).